A 354-amino-acid polypeptide reads, in one-letter code: MIESFNQFGSSLLGGFWPVVWNLIKIVALIAPLMGCVAYLTLWERKAIGWTQIRPGPNRVGPWGLLTPIADAVKLIFKEIILPTAANKGLFLLGPVMTIMPALAAWVVVPFGPEVALANINAGLLFLMAITSMEVYGVIIAGWASNSKYAFLGALRASAQMVSYEIAMGFALVVVLMVSGTLNMTEIVLGQDRGRFADMGLNFLSWNWLPLFPIFIVYFISGLAETNRHPFDVVEGESEIVAGHMIEYSGMAFAMFFLAEYANMILISALAVTMFLGGWLPPIDSVVFNWIPGWIWLGLKTFVVVTMFLWVRSTFPRFRYDQIMRLGWKIFIPITLIWLVVVGLWIQSPWNIWK.

10 helical membrane-spanning segments follow: residues 12–32 (LLGG…LIAP), 62–82 (PWGL…EIIL), 89–109 (GLFL…WVVV), 124–144 (LLFL…AGWA), 162–182 (VSYE…SGTL), 203–223 (FLSW…ISGL), 239–259 (EIVA…FFLA), 263–283 (NMIL…LPPI), 291–311 (IPGW…FLWV), and 326–346 (LGWK…GLWI).

The protein belongs to the complex I subunit 1 family. As to quaternary structure, NDH-1 is composed of 14 different subunits. Subunits NuoA, H, J, K, L, M, N constitute the membrane sector of the complex.

The protein resides in the cell inner membrane. The enzyme catalyses a quinone + NADH + 5 H(+)(in) = a quinol + NAD(+) + 4 H(+)(out). Its function is as follows. NDH-1 shuttles electrons from NADH, via FMN and iron-sulfur (Fe-S) centers, to quinones in the respiratory chain. The immediate electron acceptor for the enzyme in this species is believed to be ubiquinone. Couples the redox reaction to proton translocation (for every two electrons transferred, four hydrogen ions are translocated across the cytoplasmic membrane), and thus conserves the redox energy in a proton gradient. This subunit may bind ubiquinone. The sequence is that of NADH-quinone oxidoreductase subunit H from Methylibium petroleiphilum (strain ATCC BAA-1232 / LMG 22953 / PM1).